We begin with the raw amino-acid sequence, 118 residues long: Large ribosomal subunit protein uL18 (118 aa).

The interval 1–24 (MITKPDKNKIRQKRHRRVRGKLSG) is disordered. The span at 10–20 (IRQKRHRRVRG) shows a compositional bias: basic residues.

This sequence belongs to the universal ribosomal protein uL18 family. Part of the 50S ribosomal subunit; part of the 5S rRNA/L5/L18/L25 subcomplex. Contacts the 5S and 23S rRNAs.

In terms of biological role, this is one of the proteins that bind and probably mediate the attachment of the 5S RNA into the large ribosomal subunit, where it forms part of the central protuberance. The polypeptide is Large ribosomal subunit protein uL18 (Streptococcus sanguinis (strain SK36)).